A 228-amino-acid chain; its full sequence is PKHD-type hydroxylase Rmet_3078 (228 aa).

Residues 80-180 (IVYPPMFNRY…RVGCFFWIQS (101 aa)) enclose the Fe2OG dioxygenase domain. H98, D100, and H161 together coordinate Fe cation. R171 is a 2-oxoglutarate binding site.

The cofactor is Fe(2+). Requires L-ascorbate as cofactor.

The polypeptide is PKHD-type hydroxylase Rmet_3078 (Cupriavidus metallidurans (strain ATCC 43123 / DSM 2839 / NBRC 102507 / CH34) (Ralstonia metallidurans)).